A 215-amino-acid chain; its full sequence is Chaperone protein TorD (215 aa).

This sequence belongs to the TorD/DmsD family. TorD subfamily.

The protein resides in the cytoplasm. Involved in the biogenesis of TorA. Acts on TorA before the insertion of the molybdenum cofactor and, as a result, probably favors a conformation of the apoenzyme that is competent for acquiring the cofactor. The sequence is that of Chaperone protein TorD from Vibrio parahaemolyticus serotype O3:K6 (strain RIMD 2210633).